Here is a 510-residue protein sequence, read N- to C-terminus: NAD(P)H-quinone oxidoreductase subunit 2, chloroplastic (510 aa).

12 consecutive transmembrane segments (helical) span residues 24–44, 59–79, 99–119, 124–144, 149–169, 183–203, 229–249, 295–315, 323–343, 354–374, 395–415, and 418–438; these read LLLFHGSFIFPECILIFGLIL, WFYFISSTSLVISITALLFRW, IFQFLILLCSTLCIPLSVEYI, MAITEFLLFVLTATLGGMFLC, LITIFVAPECFSLCSYLLSGY, YLLMGGASSSILVHGFSWLYG, ISIALIFITVGIGFKLSPAPF, WHLLLEILAILSMILGNLIAI, MLAYSSIGQIGYVIIGIIVGD, YMLFYISMNLGTFACIVLFGL, ALSSALCLLSLGGLPPLAGFF, and LYLFWCGWQAGLYFLVSIGLL.

The protein belongs to the complex I subunit 2 family. NDH is composed of at least 16 different subunits, 5 of which are encoded in the nucleus.

It is found in the plastid. The protein localises to the chloroplast thylakoid membrane. It carries out the reaction a plastoquinone + NADH + (n+1) H(+)(in) = a plastoquinol + NAD(+) + n H(+)(out). The enzyme catalyses a plastoquinone + NADPH + (n+1) H(+)(in) = a plastoquinol + NADP(+) + n H(+)(out). In terms of biological role, NDH shuttles electrons from NAD(P)H:plastoquinone, via FMN and iron-sulfur (Fe-S) centers, to quinones in the photosynthetic chain and possibly in a chloroplast respiratory chain. The immediate electron acceptor for the enzyme in this species is believed to be plastoquinone. Couples the redox reaction to proton translocation, and thus conserves the redox energy in a proton gradient. The sequence is that of NAD(P)H-quinone oxidoreductase subunit 2, chloroplastic from Ananas comosus (Pineapple).